Consider the following 496-residue polypeptide: NADH-quinone oxidoreductase subunit N (496 aa).

The next 13 membrane-spanning stretches (helical) occupy residues 16–36 (SLSP…VGAI), 46–66 (CVFC…FNGL), 79–99 (ISII…PLAL), 116–136 (FLFM…LIIF), 166–186 (FAMG…FYLA), 208–228 (LIIL…LSLI), 245–267 (LAGY…IFAM), 278–298 (DMLY…ALVQ), 304–324 (MLAF…VANS), 331–351 (LFFY…MLWV), 382–402 (AVIM…SVFW), 422–442 (IIMI…VFMF), and 464–484 (VIVG…GAIL).

The protein belongs to the complex I subunit 2 family. As to quaternary structure, NDH-1 is composed of 14 different subunits. Subunits NuoA, H, J, K, L, M, N constitute the membrane sector of the complex.

Its subcellular location is the cell inner membrane. It catalyses the reaction a quinone + NADH + 5 H(+)(in) = a quinol + NAD(+) + 4 H(+)(out). Its function is as follows. NDH-1 shuttles electrons from NADH, via FMN and iron-sulfur (Fe-S) centers, to quinones in the respiratory chain. The immediate electron acceptor for the enzyme in this species is believed to be ubiquinone. Couples the redox reaction to proton translocation (for every two electrons transferred, four hydrogen ions are translocated across the cytoplasmic membrane), and thus conserves the redox energy in a proton gradient. In Campylobacter concisus (strain 13826), this protein is NADH-quinone oxidoreductase subunit N.